Reading from the N-terminus, the 447-residue chain is Trigger factor (447 aa).

A PPIase FKBP-type domain is found at 164–249 (GNQVTFDFEG…VKLVEKSKLP (86 aa)).

This sequence belongs to the FKBP-type PPIase family. Tig subfamily.

It localises to the cytoplasm. The enzyme catalyses [protein]-peptidylproline (omega=180) = [protein]-peptidylproline (omega=0). In terms of biological role, involved in protein export. Acts as a chaperone by maintaining the newly synthesized protein in an open conformation. Functions as a peptidyl-prolyl cis-trans isomerase. This chain is Trigger factor, found in Psychrobacter arcticus (strain DSM 17307 / VKM B-2377 / 273-4).